A 170-amino-acid chain; its full sequence is Calcineurin subunit B type 2 (170 aa).

Residue Gly2 is the site of N-myristoyl glycine attachment. 4 consecutive EF-hand domains span residues 18–46, 50–85, 87–122, and 128–163; these read DEIK…FTSM, QENP…FSVR, DEEQ…MVGD, and QLQQ…LEIH. Ca(2+)-binding residues include Asp63, Asp65, Asp67, Gln69, Glu74, Asp100, Asp102, Asp104, Tyr106, and Glu111. The interval 131-136 is calcineurin A binding; that stretch reads QLVDKT. The Ca(2+) site is built by Asp141, Asp143, Asp145, Lys147, and Glu152.

It belongs to the calcineurin regulatory subunit family. As to quaternary structure, forms a complex composed of a calmodulin-dependent catalytic subunit (also known as calcineurin A) and a regulatory Ca(2+)-binding subunit (also known as calcineurin B). There are three catalytic subunits, each encoded by a separate gene (PPP3CA, PPP3CB, and PPP3CC) and two regulatory subunits which are also encoded by separate genes (PPP3R1 and PPP3R2). Interacts with SPATA33 (via PQIIIT motif).

The protein resides in the mitochondrion. In terms of biological role, regulatory subunit of calcineurin, a calcium-dependent, calmodulin stimulated protein phosphatase. Confers calcium sensitivity. This chain is Calcineurin subunit B type 2 (PPP3R2), found in Bos taurus (Bovine).